We begin with the raw amino-acid sequence, 246 residues long: Probable chemoreceptor glutamine deamidase CheD (246 aa).

The segment at 225–246 is disordered; it reads GAGVQPAVQKAASPYAANLSRK.

This sequence belongs to the CheD family.

The catalysed reaction is L-glutaminyl-[protein] + H2O = L-glutamyl-[protein] + NH4(+). Functionally, probably deamidates glutamine residues to glutamate on methyl-accepting chemotaxis receptors (MCPs), playing an important role in chemotaxis. This Burkholderia vietnamiensis (strain G4 / LMG 22486) (Burkholderia cepacia (strain R1808)) protein is Probable chemoreceptor glutamine deamidase CheD.